The sequence spans 1966 residues: Dedicator of cytokinesis protein 4 (1966 aa).

Positions 6 to 67 (EHEKYGVVIA…PSSYVHLKNA (62 aa)) constitute an SH3 domain. Tyr-167 is subject to Phosphotyrosine. At Thr-193 the chain carries Phosphothreonine. The region spanning 401 to 574 (RNDLYITIER…ESFCITSFLC (174 aa)) is the C2 DOCK-type domain. One can recognise a DOCKER domain in the interval 1190-1596 (KTELNKEEMY…LGIQEFSACM (407 aa)). Phosphoserine is present on residues Ser-1599, Ser-1607, Ser-1614, Ser-1618, Ser-1620, and Ser-1631. 2 disordered regions span residues 1648–1729 (SQAS…IYPT) and 1742–1966 (IGDG…VSQL). The span at 1672–1703 (PSPSTSSLSSTHSASPNVTSSAPSSARASPLL) shows a compositional bias: low complexity. Ser-1769 bears the Phosphoserine mark. Residues 1788–1794 (PPVPPRP) carry the SH3-binding motif. Polar residues predominate over residues 1795-1809 (TQTASPARHTTSVSP). A compositionally biased stretch (low complexity) spans 1838–1863 (SNSPVLSGSYSSGISSLSRCSTSETS). Polar residues predominate over residues 1864 to 1873 (GFENQVNEQS). A compositionally biased stretch (basic and acidic residues) spans 1941–1954 (SHLENGARRTDPGP).

Belongs to the DOCK family. Interacts with nucleotide-free Rap1; functions as a guanine nucleotide exchange factor (GEF) for Rap1. Interacts (via DOCKER domain) with RAC1; functions as a guanine nucleotide exchange factor (GEF) for RAC1. Interacts with the SH3 domain of CRK. Interacts with FASLG. Interacts with ELMO2 and EPHA2; mediates activation of RAC1 by EPHA2. Interacts with USH1C (via PDZ 1 domain). In terms of tissue distribution, widely expressed at low level. Highly expressed in skeletal muscle, prostate and ovary. May be specifically expressed in the brain and eye.

It localises to the cell membrane. The protein localises to the cell projection. Its subcellular location is the cytoplasm. The protein resides in the cytosol. Functions as a guanine nucleotide exchange factor (GEF) that promotes the exchange of GDP to GTP, converting inactive GDP-bound small GTPases into their active GTP-bound form. Involved in regulation of adherens junction between cells. Plays a role in cell migration. Functionally, has a higher guanine nucleotide exchange factor activity compared to other isoforms. The polypeptide is Dedicator of cytokinesis protein 4 (DOCK4) (Homo sapiens (Human)).